The primary structure comprises 301 residues: MTLTVDHAMNIAQVLTESLPYIQRFAGKTVVIKYGGNAMVDDDLKNSFSRDVVLMKLVGINPVVIHGGGPQIGRLLERVGKQSEFIQGMRVTDKETMDIVEMVLSGQVNKEIVNLINRHGGHAVGLTGKDGTLIHAEKLHLTQDRDDPTINIPEIIDMGHVGKVKQINTRIVDLLVQSDFIPVIAPIGVGENGQSYNINADLVAGKLAEALGAEKLILLTNTPGLLDKEGKLLTGLNAEQVQSLIADGTISDGMLPKIQCALEAVHAGVRSAHILDGRVEHAVILELFTDEGIGTLIRNRH.

Residues 68–69 (GG), Arg-90, and Asn-197 contribute to the substrate site.

It belongs to the acetylglutamate kinase family. ArgB subfamily.

It localises to the cytoplasm. The enzyme catalyses N-acetyl-L-glutamate + ATP = N-acetyl-L-glutamyl 5-phosphate + ADP. Its pathway is amino-acid biosynthesis; L-arginine biosynthesis; N(2)-acetyl-L-ornithine from L-glutamate: step 2/4. Its function is as follows. Catalyzes the ATP-dependent phosphorylation of N-acetyl-L-glutamate. In Nitrosococcus oceani (strain ATCC 19707 / BCRC 17464 / JCM 30415 / NCIMB 11848 / C-107), this protein is Acetylglutamate kinase.